The primary structure comprises 83 residues: Retinal cone rhodopsin-sensitive cGMP 3',5'-cyclic phosphodiesterase subunit gamma (83 aa).

Residues 1 to 19 (MSDNTTLAPPAASQAPATP) are compositionally biased toward low complexity. Positions 1 to 51 (MSDNTTLAPPAASQAPATPRKGPPKFKQRQTRQFKSKPPKKGVKGFGDDIP) are disordered. Positions 22-43 (GPPKFKQRQTRQFKSKPPKKGV) are enriched in basic residues.

The protein belongs to the rod/cone cGMP-PDE gamma subunit family. In terms of assembly, tetramer composed of two catalytic chains (alpha and beta), and two inhibitory chains (gamma).

The catalysed reaction is 3',5'-cyclic GMP + H2O = GMP + H(+). In terms of biological role, participates in processes of transmission and amplification of the visual signal. cGMP-PDEs are the effector molecules in G-protein-mediated phototransduction in vertebrate rods and cones. The sequence is that of Retinal cone rhodopsin-sensitive cGMP 3',5'-cyclic phosphodiesterase subunit gamma (PDE6H) from Ictidomys tridecemlineatus (Thirteen-lined ground squirrel).